The following is a 704-amino-acid chain: Polyribonucleotide nucleotidyltransferase (704 aa).

Mg(2+) contacts are provided by aspartate 487 and aspartate 493. A KH domain is found at 554–613; sequence PRLLTIKIHPDKIREVIGKGGSTIQAITKETGTQIDIQDDGTIIIASVNAIAAQAAKSRI. In terms of domain architecture, S1 motif spans 623-691; it reads GRIYEGKVAK…KQGRIRLSIK (69 aa).

It belongs to the polyribonucleotide nucleotidyltransferase family. As to quaternary structure, component of the RNA degradosome, which is a multiprotein complex involved in RNA processing and mRNA degradation. Requires Mg(2+) as cofactor.

It localises to the cytoplasm. The enzyme catalyses RNA(n+1) + phosphate = RNA(n) + a ribonucleoside 5'-diphosphate. Its function is as follows. Involved in mRNA degradation. Catalyzes the phosphorolysis of single-stranded polyribonucleotides processively in the 3'- to 5'-direction. This Xanthomonas campestris pv. campestris (strain B100) protein is Polyribonucleotide nucleotidyltransferase.